A 347-amino-acid polypeptide reads, in one-letter code: Guanine nucleotide-binding protein alpha-6 subunit (347 aa).

Positions 30–347 (GITQVLLLGA…IIVGHVMDLV (318 aa)) constitute a G-alpha domain. The interval 33-46 (QVLLLGAGESGKST) is G1 motif. GTP-binding positions include 38-45 (GAGESGKS), 172-178 (LRARVTT), 197-201 (DVGGQ), 266-269 (NKKD), and A322. Positions 45 and 178 each coordinate Mg(2+). Residues 170 to 178 (DALRARVTT) are G2 motif. A G3 motif region spans residues 193 to 202 (MKIIDVGGQR). Residues 262-269 (ILFLNKKD) form a G4 motif region. Positions 320–325 (TIAVDT) are G5 motif.

The protein belongs to the G-alpha family. G proteins are composed of 3 units; alpha, beta and gamma. The alpha chain contains the guanine nucleotide binding site.

Functionally, guanine nucleotide-binding proteins (G proteins) are involved as modulators or transducers in various transmembrane signaling systems. G alpha-6 is involved in the folic acid chemotaxis signal transduction pathway. The protein is Guanine nucleotide-binding protein alpha-6 subunit (gpaF) of Dictyostelium discoideum (Social amoeba).